We begin with the raw amino-acid sequence, 673 residues long: Xyloglucan glycosyltransferase 4 (673 aa).

2 helical membrane-spanning segments follow: residues 90-110 (FIKA…VAHF) and 144-164 (IAPL…IQSL). Aspartate 238 is an active-site residue. Positions 297 and 299 each coordinate substrate. Aspartate 391 is a catalytic residue. Transmembrane regions (helical) follow at residues 469–489 (LILP…TMFI) and 494–514 (LPLW…ILPS). Serine 581 is modified (phosphoserine). 2 helical membrane passes run 623 to 643 (VFKK…RSFL) and 648 to 668 (LHFY…LDLI).

It belongs to the glycosyltransferase 2 family. Plant cellulose synthase-like C subfamily. As to quaternary structure, homodimer. Interacts with XXT5. Interacts with FUT1, MUR3 and XLT2. In terms of tissue distribution, expressed in seedlings, roots, leaves, stems, flowers and seeds.

Its subcellular location is the golgi apparatus membrane. Functionally, beta-1,4-glucan synthase rather involved in the synthesis of the xyloglucan backbone than cellulose. Seems to work simultaneously with xyloglucan 6-xylosyltransferase. Xyloglucan is a noncellulosic polysaccharides of plant cell wall and consists of a glucan backbone substituted by xylose, galactose and fucose. Associates with other xyloglucan-synthesizing enzymes to form multiprotein complexes for xyloglucan synthesis in the Golgi. The chain is Xyloglucan glycosyltransferase 4 from Arabidopsis thaliana (Mouse-ear cress).